We begin with the raw amino-acid sequence, 413 residues long: DnaJ protein homolog xdj1 (413 aa).

The 68-residue stretch at 6–73 (KLYDILEVHF…ESREMYDMYG (68 aa)) folds into the J domain. A CR-type zinc finger spans residues 134-219 (GKEVKLRATR…CKGSGTVPEQ (86 aa)). 4 CXXCXGXG motif repeats span residues 147–154 (CPRCQGRG), 164–171 (CLSCDGKG), 191–198 (CDTCNGKG), and 207–214 (CKHCKGSG). Residue Cys-410 is modified to Cysteine methyl ester. A lipid anchor (S-farnesyl cysteine) is attached at Cys-410. The propeptide at 411–413 (QAQ) is removed in mature form.

The protein localises to the endoplasmic reticulum membrane. The sequence is that of DnaJ protein homolog xdj1 (xdj1) from Schizosaccharomyces pombe (strain 972 / ATCC 24843) (Fission yeast).